A 232-amino-acid chain; its full sequence is Beta-casein (232 aa).

A signal peptide spans 1–15 (MKVLILACRVALALA). Residues serine 30, serine 32, serine 33, and serine 34 each carry the phosphoserine modification.

Belongs to the beta-casein family. In terms of tissue distribution, mammary gland specific. Secreted in milk.

The protein resides in the secreted. In terms of biological role, important role in determination of the surface properties of the casein micelles. The sequence is that of Beta-casein (CSN2) from Camelus dromedarius (Dromedary).